The sequence spans 491 residues: Ribulose-1,5 bisphosphate carboxylase/oxygenase large subunit N-methyltransferase, chloroplastic (491 aa).

The 225-residue stretch at 67-291 (EGVVTTKTPV…AGDQLFIQYD (225 aa)) folds into the SET domain.

The protein belongs to the class V-like SAM-binding methyltransferase superfamily. Plant protein-lysine LSMT methyltransferase family.

It is found in the plastid. The protein localises to the chloroplast. It carries out the reaction L-lysyl-[ribulose-1,5-bisphosphate carboxylase] + 3 S-adenosyl-L-methionine = N(6),N(6),N(6)-trimethyl-L-lysyl-[ribulose-1,5-bisphosphate carboxylase] + 3 S-adenosyl-L-homocysteine + 3 H(+). Functionally, methylates 'Lys-14' of the large subunit of RuBisCO. The protein is Ribulose-1,5 bisphosphate carboxylase/oxygenase large subunit N-methyltransferase, chloroplastic (RBCMT) of Nicotiana tabacum (Common tobacco).